Reading from the N-terminus, the 289-residue chain is Trimeric intracellular cation channel type B (289 aa).

The Lumenal portion of the chain corresponds to 1–18 (MDVFAFFNLNELAFGLSK). Residues 19–36 (LPMFPYFDMAHYIISVMS) form a helical membrane-spanning segment. Residues 37 to 49 (LREQPGALCVSQR) are Cytoplasmic-facing. A helical transmembrane segment spans residues 50–73 (SPLACWFSSMLYCFGGAVLSALML). Over 74-85 (ADAPVAPLSNTT) the chain is Lumenal. A helical transmembrane segment spans residues 86–103 (NLLLATLMWYLVFYCPLD). At 104 to 107 (VVYS) the chain is on the cytoplasmic side. Residues 108–125 (LASLLPLRLVLTAMKEVT) traverse the membrane as a helical segment. A 1,2-diacyl-sn-glycero-3-phospho-(1D-myo-inositol-4,5-bisphosphate)-binding residues include K122 and R126. Residues 126 to 144 (RTWKVLSGVSQAGSKYSDA) lie on the Lumenal side of the membrane. Residues 145–162 (LFVMVAVGWAKGAGGGLI) form a helical membrane-spanning segment. Residues 163–183 (SNFEQLVRGVWKPETNELLKM) are Cytoplasmic-facing. A helical membrane pass occupies residues 184–201 (SYPTKVTLLGAVVFSLQQ). Residues 202-210 (CRYLPIQTH) lie on the Lumenal side of the membrane. Residues 211–230 (HLTFIYTLFTVTNKTRMMLL) traverse the membrane as a helical segment. The Cytoplasmic segment spans residues 231-289 (GSSSHPLSSLESFLYKTLFVRPLTDLSAEHTHSKHNGSVPEPTTAQTHTKEAEASKKTN). Residues 260–289 (HTHSKHNGSVPEPTTAQTHTKEAEASKKTN) form a disordered region. Positions 278–289 (HTKEAEASKKTN) are enriched in basic and acidic residues.

This sequence belongs to the TMEM38 family. As to quaternary structure, homotrimer; conformation seems to be controled by binding to diacylglycerol (DAG).

The protein localises to the endoplasmic reticulum membrane. It catalyses the reaction K(+)(in) = K(+)(out). Channel activity is activated by increased cytosolic Ca(2+) levels and blocked by luminal high Ca(2+) levels. Intracellular monovalent cation channel required for maintenance of rapid intracellular calcium release. Acts as a potassium counter-ion channel that functions in synchronization with calcium release from intracellular stores. Activated by increased cytosolic Ca(2+) levels. The chain is Trimeric intracellular cation channel type B (tmem38b) from Danio rerio (Zebrafish).